Consider the following 454-residue polypeptide: Putative KilA-N domain-containing protein L4 (454 aa).

Over residues 1 to 12 (MPQKTSKSKSSR) the composition is skewed to basic residues. The interval 1-159 (MPQKTSKSKS…DVPEEEYDDN (159 aa)) is disordered. Positions 14 to 64 (RYIEDSDDETRGRSRNRSIEKSRSRSLDKSQKKSRDKSLTRSRSKSPEKSK) are enriched in basic and acidic residues. Positions 65–79 (SRSKSLTRSRSKSPK) are enriched in basic residues. Acidic residues-rich tracts occupy residues 98-123 (YTTE…DEEL) and 130-158 (ESDE…EYDD). Residues 172 to 276 (EFARGKFGDF…LKVSDIVIEY (105 aa)) enclose the KilA-N domain.

The chain is Putative KilA-N domain-containing protein L4 from Acanthamoeba polyphaga mimivirus (APMV).